The sequence spans 368 residues: Alanine racemase (368 aa).

Lys35 functions as the Proton acceptor; specific for D-alanine in the catalytic mechanism. Lys35 carries the post-translational modification N6-(pyridoxal phosphate)lysine. Arg130 contributes to the substrate binding site. Tyr253 serves as the catalytic Proton acceptor; specific for L-alanine. Residue Met305 participates in substrate binding.

This sequence belongs to the alanine racemase family. It depends on pyridoxal 5'-phosphate as a cofactor.

It carries out the reaction L-alanine = D-alanine. Its pathway is amino-acid biosynthesis; D-alanine biosynthesis; D-alanine from L-alanine: step 1/1. Catalyzes the interconversion of L-alanine and D-alanine. May also act on other amino acids. The chain is Alanine racemase (alr) from Cupriavidus metallidurans (strain ATCC 43123 / DSM 2839 / NBRC 102507 / CH34) (Ralstonia metallidurans).